A 142-amino-acid chain; its full sequence is Large ribosomal subunit protein uL13 (142 aa).

It belongs to the universal ribosomal protein uL13 family. In terms of assembly, part of the 50S ribosomal subunit.

In terms of biological role, this protein is one of the early assembly proteins of the 50S ribosomal subunit, although it is not seen to bind rRNA by itself. It is important during the early stages of 50S assembly. The polypeptide is Large ribosomal subunit protein uL13 (Koribacter versatilis (strain Ellin345)).